A 556-amino-acid polypeptide reads, in one-letter code: Sphingomyelinase C (556 aa).

An N-terminal signal peptide occupies residues 1–27; the sequence is MRIKKYTKVRLLVNCCLLLFFLIDCGA.

The protein resides in the secreted. The catalysed reaction is a sphingomyelin + H2O = phosphocholine + an N-acylsphing-4-enine + H(+). The chain is Sphingomyelinase C (sph) from Leptospira interrogans.